Here is a 108-residue protein sequence, read N- to C-terminus: Beta-defensin 126 (108 aa).

Positions 1–20 (MKSLLFTLAVFMLLAQLVSG) are cleaved as a signal peptide. The in vitro binds to LPS, mediates antimicrobial activity and inhibits LPS-mediated inflammation stretch occupies residues 21-63 (NWYVKKCLNDVGICKKKCKPGEMHIKNGWATCGKQRDCCVPAD). Intrachain disulfides connect Cys-27–Cys-58, Cys-34–Cys-52, and Cys-38–Cys-59.

The protein belongs to the beta-defensin family. In terms of assembly, homodimer or homooligomer; disulfide-linked. In terms of processing, O-glycosylated; glycans contain alpha(2,3)-linked sialic acids.

It is found in the secreted. In terms of biological role, highly glycosylated atypical beta-defensin involved in several aspects of sperm function. Facilitates sperm transport in the female reproductive tract and contributes to sperm protection against immunodetection; both functions are probably implicating the negative surface charge provided by its O-linked oligosaccharides in the sperm glycocalyx. Involved in binding of sperm to oviductal epithelial cells to form a sperm reservoir until ovulation. Release from the sperm surface during capacitation and ovaluation by an elevation of oviductal fluid pH is unmasking other surface components and allows sperm to penetrate the cumulus matrix and bind to the zona pellucida of the oocyte. In vitro has antimicrobial activity and may inhibit LPS-mediated inflammation. The polypeptide is Beta-defensin 126 (DEFB126) (Pan troglodytes (Chimpanzee)).